A 585-amino-acid chain; its full sequence is Isocitrate dehydrogenase kinase/phosphatase (585 aa).

Residues 315 to 321 (APGVKGM) and Lys336 each bind ATP. Asp371 is an active-site residue.

Belongs to the AceK family.

The protein resides in the cytoplasm. The enzyme catalyses L-seryl-[isocitrate dehydrogenase] + ATP = O-phospho-L-seryl-[isocitrate dehydrogenase] + ADP + H(+). In terms of biological role, bifunctional enzyme which can phosphorylate or dephosphorylate isocitrate dehydrogenase (IDH) on a specific serine residue. This is a regulatory mechanism which enables bacteria to bypass the Krebs cycle via the glyoxylate shunt in response to the source of carbon. When bacteria are grown on glucose, IDH is fully active and unphosphorylated, but when grown on acetate or ethanol, the activity of IDH declines drastically concomitant with its phosphorylation. This is Isocitrate dehydrogenase kinase/phosphatase from Photorhabdus laumondii subsp. laumondii (strain DSM 15139 / CIP 105565 / TT01) (Photorhabdus luminescens subsp. laumondii).